The sequence spans 475 residues: Glycogen synthase (475 aa).

An ADP-alpha-D-glucose-binding site is contributed by K15.

This sequence belongs to the glycosyltransferase 1 family. Bacterial/plant glycogen synthase subfamily.

The enzyme catalyses [(1-&gt;4)-alpha-D-glucosyl](n) + ADP-alpha-D-glucose = [(1-&gt;4)-alpha-D-glucosyl](n+1) + ADP + H(+). It functions in the pathway glycan biosynthesis; glycogen biosynthesis. Functionally, synthesizes alpha-1,4-glucan chains using ADP-glucose. In Clostridium kluyveri (strain ATCC 8527 / DSM 555 / NBRC 12016 / NCIMB 10680 / K1), this protein is Glycogen synthase.